We begin with the raw amino-acid sequence, 368 residues long: DNA-directed RNA polymerase II subunit GRINL1A (368 aa).

The tract at residues 29–68 (KRQERLLRNEKFICKLPDKGKKIFDSFAKLKAAIAECEEV) is important for transcription repressor activity. 3 stretches are compositionally biased toward polar residues: residues 116 to 131 (SSVD…QNQG), 205 to 224 (GEQQ…LSSG), and 258 to 273 (QNDS…SPIS). 3 disordered regions span residues 116-186 (SSVD…DTSS), 203-227 (DQGE…GTEK), and 255-282 (PFRQ…RRDK). Residues 227–298 (KKPHYMEVLE…TAARLLPLHH (72 aa)) are interaction with Pol II. S270 is subject to Phosphoserine. The tract at residues 299–314 (MPTQLLSIEESLALQK) is important for transcription repressor activity. Residues 301 to 335 (TQLLSIEESLALQKQQKQNYEEMQAKLAAQKLAER) are a coiled coil. The segment at 315–340 (QQKQNYEEMQAKLAAQKLAERLNIKM) is interaction with Pol II. The disordered stretch occupies residues 339–368 (KMRSYNPEGESSGRYREVRDEDDDWSSDEF). The segment covering 358–368 (DEDDDWSSDEF) has biased composition (acidic residues).

Belongs to the GRINL1 family. In terms of assembly, component of the Pol II(G) complex, which contains the RNA polymerase II (Pol II) core complex subunits and POLR2M isoform 1. Pol II(G) appears to be an abundant form of Pol II. Post-translationally, dephosphorylated at Ser-270 by the PNUTS-PP1 complex, promoting RNA polymerase II transcription pause-release. Detected in adult an fetal brain. Detected in heart, kidney, skeletal muscle, small intestine, lung, prostate and testis.

It localises to the nucleus. Functionally, appears to be a stable component of the Pol II(G) complex form of RNA polymerase II (Pol II). Pol II synthesizes mRNA precursors and many functional non-coding RNAs and is the central component of the basal RNA polymerase II transcription machinery. May play a role in the Mediator complex-dependent regulation of transcription activation. Acts as a negative regulator of transcriptional activation; this repression is relieved by the Mediator complex, which restores Pol II(G) activator-dependent transcription to a level equivalent to that of Pol II. The protein is DNA-directed RNA polymerase II subunit GRINL1A (POLR2M) of Homo sapiens (Human).